The following is a 189-amino-acid chain: Flavin prenyltransferase UbiX (189 aa).

Residues 10–12, Ser36, 91–94, and Arg126 contribute to the FMN site; these read GAS and STNT. Residues Tyr156 and Lys172 each coordinate dimethylallyl phosphate.

Belongs to the UbiX/PAD1 family.

The catalysed reaction is dimethylallyl phosphate + FMNH2 = prenylated FMNH2 + phosphate. In terms of biological role, flavin prenyltransferase that catalyzes the synthesis of the prenylated FMN cofactor (prenyl-FMN) for 4-hydroxy-3-polyprenylbenzoic acid decarboxylase UbiD. The prenyltransferase is metal-independent and links a dimethylallyl moiety from dimethylallyl monophosphate (DMAP) to the flavin N5 and C6 atoms of FMN. The chain is Flavin prenyltransferase UbiX from Aquifex aeolicus (strain VF5).